The chain runs to 94 residues: Non-specific lipid-transfer protein 1 (94 aa).

Disulfide bonds link Cys-4–Cys-53, Cys-14–Cys-30, Cys-31–Cys-76, and Cys-51–Cys-90.

Plant non-specific lipid-transfer proteins transfer phospholipids as well as galactolipids across membranes. May play a role in wax or cutin deposition in the cell walls of expanding epidermal cells and certain secretory tissues. The protein is Non-specific lipid-transfer protein 1 of Amaranthus hypochondriacus (Prince-of-Wales feather).